A 179-amino-acid chain; its full sequence is Large ribosomal subunit protein uL5 (179 aa).

Belongs to the universal ribosomal protein uL5 family. As to quaternary structure, part of the 50S ribosomal subunit; part of the 5S rRNA/L5/L18/L25 subcomplex. Contacts the 5S rRNA and the P site tRNA. Forms a bridge to the 30S subunit in the 70S ribosome.

In terms of biological role, this is one of the proteins that bind and probably mediate the attachment of the 5S RNA into the large ribosomal subunit, where it forms part of the central protuberance. In the 70S ribosome it contacts protein S13 of the 30S subunit (bridge B1b), connecting the 2 subunits; this bridge is implicated in subunit movement. Contacts the P site tRNA; the 5S rRNA and some of its associated proteins might help stabilize positioning of ribosome-bound tRNAs. This Nitratidesulfovibrio vulgaris (strain ATCC 29579 / DSM 644 / CCUG 34227 / NCIMB 8303 / VKM B-1760 / Hildenborough) (Desulfovibrio vulgaris) protein is Large ribosomal subunit protein uL5.